A 324-amino-acid chain; its full sequence is MATH domain and coiled-coil domain-containing protein At3g44790 (324 aa).

One can recognise an MATH domain in the interval 3–125 (YEKFTWVIKN…NNEVKIVVEV (123 aa)). Residues 241 to 309 (FKVDWLERKL…ALLEKEKAKS (69 aa)) are a coiled coil.

This is MATH domain and coiled-coil domain-containing protein At3g44790 from Arabidopsis thaliana (Mouse-ear cress).